The sequence spans 394 residues: Lipoyl synthase, chloroplastic (394 aa).

The N-terminal 36 residues, 1–36 (MMHHCSITKPTFSISISTQKLHHHSSKFLNLGFRIR), are a transit peptide targeting the chloroplast. [4Fe-4S] cluster is bound by residues Cys-127, Cys-132, Cys-138, Cys-158, Cys-162, Cys-165, and Ser-373. One can recognise a Radical SAM core domain in the interval 141-362 (GGGDGVATAT…KTYGESIGFR (222 aa)).

It belongs to the radical SAM superfamily. Lipoyl synthase family. [4Fe-4S] cluster serves as cofactor. Expressed in roots, leaves and flowers.

Its subcellular location is the plastid. It localises to the chloroplast. The enzyme catalyses [[Fe-S] cluster scaffold protein carrying a second [4Fe-4S](2+) cluster] + N(6)-octanoyl-L-lysyl-[protein] + 2 oxidized [2Fe-2S]-[ferredoxin] + 2 S-adenosyl-L-methionine + 4 H(+) = [[Fe-S] cluster scaffold protein] + N(6)-[(R)-dihydrolipoyl]-L-lysyl-[protein] + 4 Fe(3+) + 2 hydrogen sulfide + 2 5'-deoxyadenosine + 2 L-methionine + 2 reduced [2Fe-2S]-[ferredoxin]. It participates in protein modification; protein lipoylation via endogenous pathway; protein N(6)-(lipoyl)lysine from octanoyl-[acyl-carrier-protein]: step 2/2. Functionally, catalyzes the radical-mediated insertion of two sulfur atoms into the C-6 and C-8 positions of the octanoyl moiety bound to the lipoyl domains of lipoate-dependent enzymes, thereby converting the octanoylated domains into lipoylated derivatives. Together with LIP2P and LIP2P2 is essential for de novo plastidial protein lipoylation during seed development. In Arabidopsis thaliana (Mouse-ear cress), this protein is Lipoyl synthase, chloroplastic.